Reading from the N-terminus, the 313-residue chain is Ribosomal protein uL3 glutamine methyltransferase (313 aa).

Belongs to the protein N5-glutamine methyltransferase family. PrmB subfamily.

It catalyses the reaction L-glutaminyl-[ribosomal protein uL3] + S-adenosyl-L-methionine = N(5)-methyl-L-glutaminyl-[ribosomal protein uL3] + S-adenosyl-L-homocysteine + H(+). In terms of biological role, methylates large ribosomal subunit protein uL3 on a specific glutamine residue. This Pasteurella multocida (strain Pm70) protein is Ribosomal protein uL3 glutamine methyltransferase.